A 142-amino-acid chain; its full sequence is Large ribosomal subunit protein uL16 (142 aa).

It belongs to the universal ribosomal protein uL16 family. In terms of assembly, part of the 50S ribosomal subunit.

In terms of biological role, binds 23S rRNA and is also seen to make contacts with the A and possibly P site tRNAs. The protein is Large ribosomal subunit protein uL16 of Gemmatimonas aurantiaca (strain DSM 14586 / JCM 11422 / NBRC 100505 / T-27).